The sequence spans 523 residues: Peptide chain release factor 3 (523 aa).

The tr-type G domain occupies 10 to 277 (EKRRTFAIIS…SFVDLAPAPE (268 aa)). GTP contacts are provided by residues 19–26 (SHPDAGKT), 87–91 (DTPGH), and 141–144 (NKLD).

It belongs to the TRAFAC class translation factor GTPase superfamily. Classic translation factor GTPase family. PrfC subfamily.

It localises to the cytoplasm. Increases the formation of ribosomal termination complexes and stimulates activities of RF-1 and RF-2. It binds guanine nucleotides and has strong preference for UGA stop codons. It may interact directly with the ribosome. The stimulation of RF-1 and RF-2 is significantly reduced by GTP and GDP, but not by GMP. The protein is Peptide chain release factor 3 of Lactobacillus acidophilus (strain ATCC 700396 / NCK56 / N2 / NCFM).